Consider the following 421-residue polypeptide: 3-isopropylmalate dehydratase large subunit (421 aa).

Cys301, Cys361, and Cys364 together coordinate [4Fe-4S] cluster.

Belongs to the aconitase/IPM isomerase family. LeuC type 2 subfamily. As to quaternary structure, heterodimer of LeuC and LeuD. [4Fe-4S] cluster is required as a cofactor.

It catalyses the reaction (2R,3S)-3-isopropylmalate = (2S)-2-isopropylmalate. The protein operates within amino-acid biosynthesis; L-leucine biosynthesis; L-leucine from 3-methyl-2-oxobutanoate: step 2/4. Catalyzes the isomerization between 2-isopropylmalate and 3-isopropylmalate, via the formation of 2-isopropylmaleate. This Desulfitobacterium hafniense (strain Y51) protein is 3-isopropylmalate dehydratase large subunit.